Here is a 164-residue protein sequence, read N- to C-terminus: Cytochrome c-type biogenesis protein CcmE (164 aa).

Residues 1–8 lie on the Cytoplasmic side of the membrane; it reads MNPRRQKR. The chain crosses the membrane as a helical; Signal-anchor for type II membrane protein span at residues 9–29; it reads LIVISAIVLVIGAAIGLMLYA. Topologically, residues 30–164 are periplasmic; the sequence is LSQNIDLFYT…QAYSTPKVSG (135 aa). The heme site is built by H132 and Y136.

This sequence belongs to the CcmE/CycJ family.

The protein resides in the cell inner membrane. Functionally, heme chaperone required for the biogenesis of c-type cytochromes. Transiently binds heme delivered by CcmC and transfers the heme to apo-cytochromes in a process facilitated by CcmF and CcmH. This Pseudoalteromonas atlantica (strain T6c / ATCC BAA-1087) protein is Cytochrome c-type biogenesis protein CcmE.